A 168-amino-acid chain; its full sequence is Oocyte-secreted protein 2 (168 aa).

Residues 1–21 (MGVSMALEVLVYLAVLVWTCA) form the signal peptide.

The protein belongs to the PLAC1 family. Expressed in ovaries. Highly expressed in the germinal vesicles oocytes and metaphase II oocytes.

Its subcellular location is the secreted. It localises to the cytoplasm. In Mus musculus (Mouse), this protein is Oocyte-secreted protein 2 (Oosp2).